The chain runs to 163 residues: Neurotrophin-3 (163 aa).

An N-terminal signal peptide occupies residues Ile-1 to Ser-3. Positions Thr-4–Arg-119 are excised as a propeptide. A glycan (N-linked (GlcNAc...) asparagine) is linked at Asn-112.

The protein belongs to the NGF-beta family.

It is found in the secreted. In terms of biological role, seems to promote the survival of visceral and proprioceptive sensory neurons. This chain is Neurotrophin-3 (NTF3), found in Eryx conicus (Rough-scaled sand boa).